The primary structure comprises 154 residues: Transcription antitermination protein NusB (154 aa).

Belongs to the NusB family.

Functionally, involved in transcription antitermination. Required for transcription of ribosomal RNA (rRNA) genes. Binds specifically to the boxA antiterminator sequence of the ribosomal RNA (rrn) operons. The protein is Transcription antitermination protein NusB of Desulfosudis oleivorans (strain DSM 6200 / JCM 39069 / Hxd3) (Desulfococcus oleovorans).